Here is a 305-residue protein sequence, read N- to C-terminus: Glycine--tRNA ligase alpha subunit (305 aa).

It belongs to the class-II aminoacyl-tRNA synthetase family. In terms of assembly, tetramer of two alpha and two beta subunits.

It is found in the cytoplasm. The enzyme catalyses tRNA(Gly) + glycine + ATP = glycyl-tRNA(Gly) + AMP + diphosphate. This Vibrio parahaemolyticus serotype O3:K6 (strain RIMD 2210633) protein is Glycine--tRNA ligase alpha subunit.